Consider the following 190-residue polypeptide: DNA-invertase hin (190 aa).

The Resolvase/invertase-type recombinase catalytic domain occupies 2–135 (ATIGYIRVST…AGLAAARAQG (134 aa)). The O-(5'-phospho-DNA)-serine intermediate role is filled by Ser10. Residues 162–181 (RQQLAIIFGIGVSTLYRYFP) constitute a DNA-binding region (H-T-H motif).

Belongs to the site-specific recombinase resolvase family.

Functionally, a DNA fragment of approximately 900 base pairs, adjacent to the fljB (H2) gene, which specifies the synthesis of phase-2 flagellin, can exist in either orientation with respect to fljB. The orientation of the inversion region controls expression of fljB. The hin gene occupies about two-thirds of the inversion region; it is required for the inversion of the fljB controlling region. This is DNA-invertase hin (hin) from Salmonella typhimurium (strain LT2 / SGSC1412 / ATCC 700720).